Reading from the N-terminus, the 155-residue chain is Aspartate 1-decarboxylase (155 aa).

Residue serine 24 is the Schiff-base intermediate with substrate; via pyruvic acid of the active site. A Pyruvic acid (Ser) modification is found at serine 24. Threonine 56 is a binding site for substrate. Tyrosine 57 (proton donor) is an active-site residue. Substrate is bound at residue 72 to 74; sequence GAA.

Belongs to the PanD family. As to quaternary structure, heterooctamer of four alpha and four beta subunits. Pyruvate serves as cofactor. Is synthesized initially as an inactive proenzyme, which is activated by self-cleavage at a specific serine bond to produce a beta-subunit with a hydroxyl group at its C-terminus and an alpha-subunit with a pyruvoyl group at its N-terminus.

The protein localises to the cytoplasm. It carries out the reaction L-aspartate + H(+) = beta-alanine + CO2. It participates in cofactor biosynthesis; (R)-pantothenate biosynthesis; beta-alanine from L-aspartate: step 1/1. Catalyzes the pyruvoyl-dependent decarboxylation of aspartate to produce beta-alanine. The protein is Aspartate 1-decarboxylase of Methylocella silvestris (strain DSM 15510 / CIP 108128 / LMG 27833 / NCIMB 13906 / BL2).